The sequence spans 121 residues: Large ribosomal subunit protein uL24 (121 aa).

The interval 1-23 is disordered; it reads MVRIESSQPRKQRKARYDAPSHM.

Belongs to the universal ribosomal protein uL24 family. In terms of assembly, part of the 50S ribosomal subunit.

Functionally, one of two assembly initiator proteins, it binds directly to the 5'-end of the 23S rRNA, where it nucleates assembly of the 50S subunit. Its function is as follows. Located at the polypeptide exit tunnel on the outside of the subunit. This Methanoregula boonei (strain DSM 21154 / JCM 14090 / 6A8) protein is Large ribosomal subunit protein uL24.